A 193-amino-acid polypeptide reads, in one-letter code: MKIGLYFGTFNPIHIGHLIIANHMAENSDLDQVWMVVTPHNPLKKKDTLLDDYQRLHLVNLATEDYPKLKPSDIEFKLPQPNYTVNTLAHLQDKFPSYEFSLIMGEDNLNSLHKWKNYEAILQNHQIYVYPRLNTDTIDNQFINHQKIHIIKAPIVEISSTFIRENIKNKKNIQPLLPPKVWKYIDHSNFYKK.

Belongs to the NadD family.

The enzyme catalyses nicotinate beta-D-ribonucleotide + ATP + H(+) = deamido-NAD(+) + diphosphate. It participates in cofactor biosynthesis; NAD(+) biosynthesis; deamido-NAD(+) from nicotinate D-ribonucleotide: step 1/1. In terms of biological role, catalyzes the reversible adenylation of nicotinate mononucleotide (NaMN) to nicotinic acid adenine dinucleotide (NaAD). The protein is Probable nicotinate-nucleotide adenylyltransferase of Flavobacterium psychrophilum (strain ATCC 49511 / DSM 21280 / CIP 103535 / JIP02/86).